The following is a 325-amino-acid chain: Tetraacyldisaccharide 4'-kinase (325 aa).

Residue 54-61 (SVGGTGKT) participates in ATP binding.

This sequence belongs to the LpxK family.

It carries out the reaction a lipid A disaccharide + ATP = a lipid IVA + ADP + H(+). It participates in glycolipid biosynthesis; lipid IV(A) biosynthesis; lipid IV(A) from (3R)-3-hydroxytetradecanoyl-[acyl-carrier-protein] and UDP-N-acetyl-alpha-D-glucosamine: step 6/6. Its function is as follows. Transfers the gamma-phosphate of ATP to the 4'-position of a tetraacyldisaccharide 1-phosphate intermediate (termed DS-1-P) to form tetraacyldisaccharide 1,4'-bis-phosphate (lipid IVA). This Rickettsia felis (strain ATCC VR-1525 / URRWXCal2) (Rickettsia azadi) protein is Tetraacyldisaccharide 4'-kinase.